Consider the following 469-residue polypeptide: Coiled-coil domain-containing protein 6 (469 aa).

The segment covering 1 to 10 has biased composition (acidic residues); the sequence is MADSASESDT. The interval 1–37 is disordered; that stretch reads MADSASESDTDAAGGGPAAMQSSCSATSGGSGGGGGG. Ala2 carries the N-acetylalanine modification. Ser45 carries the phosphoserine modification. Positions 47-320 form a coiled coil; the sequence is FRLEELTNRL…LCRQLSESES (274 aa). A run of 3 repeats spans residues 99–127, 128–156, and 157–185. The tract at residues 99-228 is 5 X 29 AA tandem repeats; the sequence is EQEEEFISNT…AEKRILQEKL (130 aa). A 4; approximate repeat occupies 186-199; it reads EQLRREKIDLENTL. Repeat 5 spans residues 200-228; that stretch reads EQEQEALVNRLWKRMDKLEAEKRILQEKL. Phosphoserine is present on residues Ser233, Ser237, Ser242, Ser247, Ser277, and Ser316. The segment at 335–362 is disordered; the sequence is AQGLRPRTVSSPIPYTPSPSSSRPISPG. Thr342 bears the Phosphothreonine mark. The segment covering 344–361 has biased composition (low complexity); sequence SSPIPYTPSPSSSRPISP. Phosphoserine is present on residues Ser356 and Ser360. Arg380 bears the Omega-N-methylarginine mark. A phosphoserine mark is found at Ser388 and Ser406. The interval 394-469 is disordered; the sequence is QHMGASHGIT…QHPVHPSSQP (76 aa). Pro residues predominate over residues 419 to 444; that stretch reads PTPPPSPNTQSPVQPPPPPPPPPMQP. Residues 435-444 carry the SH3-binding motif; sequence PPPPPPPMQP. Residues 460–469 show a composition bias toward low complexity; sequence QHPVHPSSQP.

The protein resides in the cytoplasm. The protein localises to the cytoskeleton. This Mus musculus (Mouse) protein is Coiled-coil domain-containing protein 6 (Ccdc6).